Consider the following 460-residue polypeptide: Tol-Pal system protein TolB (460 aa).

An N-terminal signal peptide occupies residues methionine 1–serine 22.

The protein belongs to the TolB family. In terms of assembly, the Tol-Pal system is composed of five core proteins: the inner membrane proteins TolA, TolQ and TolR, the periplasmic protein TolB and the outer membrane protein Pal. They form a network linking the inner and outer membranes and the peptidoglycan layer.

It is found in the periplasm. In terms of biological role, part of the Tol-Pal system, which plays a role in outer membrane invagination during cell division and is important for maintaining outer membrane integrity. TolB occupies a key intermediary position in the Tol-Pal system because it communicates directly with both membrane-embedded components, Pal in the outer membrane and TolA in the inner membrane. The chain is Tol-Pal system protein TolB from Blochmanniella floridana.